Reading from the N-terminus, the 792-residue chain is Probable exo-1,4-beta-xylosidase xlnD (792 aa).

Residues 1 to 20 (MSAIKSIATVLAAILPSVLA) form the signal peptide. 4 N-linked (GlcNAc...) asparagine glycosylation sites follow: Asn23, Asn87, Asn142, and Asn246. Residue Asp310 is part of the active site. N-linked (GlcNAc...) asparagine glycosylation is found at Asn326, Asn385, Asn391, Asn404, Asn438, Asn475, Asn479, Asn516, Asn677, and Asn699.

The protein belongs to the glycosyl hydrolase 3 family.

It is found in the secreted. It catalyses the reaction Hydrolysis of (1-&gt;4)-beta-D-xylans, to remove successive D-xylose residues from the non-reducing termini.. It functions in the pathway glycan degradation; xylan degradation. Its function is as follows. Xylan 1,4-beta-xylosidase involved in the hydrolysis of xylan, a major structural heterogeneous polysaccharide found in plant biomass representing the second most abundant polysaccharide in the biosphere, after cellulose. The polypeptide is Probable exo-1,4-beta-xylosidase xlnD (xlnD) (Aspergillus clavatus (strain ATCC 1007 / CBS 513.65 / DSM 816 / NCTC 3887 / NRRL 1 / QM 1276 / 107)).